The following is a 251-amino-acid chain: Triosephosphate isomerase (251 aa).

Residue 10-12 participates in substrate binding; that stretch reads NWK. The Electrophile role is filled by His95. Glu167 (proton acceptor) is an active-site residue. Substrate-binding positions include Gly173, Ser213, and 234 to 235; that span reads GG.

The protein belongs to the triosephosphate isomerase family. In terms of assembly, homodimer.

It localises to the cytoplasm. The enzyme catalyses D-glyceraldehyde 3-phosphate = dihydroxyacetone phosphate. It participates in carbohydrate biosynthesis; gluconeogenesis. The protein operates within carbohydrate degradation; glycolysis; D-glyceraldehyde 3-phosphate from glycerone phosphate: step 1/1. In terms of biological role, involved in the gluconeogenesis. Catalyzes stereospecifically the conversion of dihydroxyacetone phosphate (DHAP) to D-glyceraldehyde-3-phosphate (G3P). The protein is Triosephosphate isomerase of Acetivibrio thermocellus (strain ATCC 27405 / DSM 1237 / JCM 9322 / NBRC 103400 / NCIMB 10682 / NRRL B-4536 / VPI 7372) (Clostridium thermocellum).